A 645-amino-acid chain; its full sequence is 1,4-alpha-glucan branching enzyme GlgB (645 aa).

Catalysis depends on D309, which acts as the Nucleophile. E352 functions as the Proton donor in the catalytic mechanism. The interval 619 to 645 (VKTRKGSKKQDGSKTKVRSNVTSRGKR) is disordered. A compositionally biased stretch (polar residues) spans 636–645 (RSNVTSRGKR).

The protein belongs to the glycosyl hydrolase 13 family. GlgB subfamily. Monomer.

The enzyme catalyses Transfers a segment of a (1-&gt;4)-alpha-D-glucan chain to a primary hydroxy group in a similar glucan chain.. Its pathway is glycan biosynthesis; glycogen biosynthesis. Its function is as follows. Catalyzes the formation of the alpha-1,6-glucosidic linkages in glycogen by scission of a 1,4-alpha-linked oligosaccharide from growing alpha-1,4-glucan chains and the subsequent attachment of the oligosaccharide to the alpha-1,6 position. This is 1,4-alpha-glucan branching enzyme GlgB from Bacillus anthracis (strain CDC 684 / NRRL 3495).